Here is a 411-residue protein sequence, read N- to C-terminus: Heparan-sulfate 6-O-sulfotransferase 1 (411 aa).

At methionine 11 to lysine 17 the chain is on the cytoplasmic side. The helical; Signal-anchor for type II membrane protein transmembrane segment at phenylalanine 18 to glycine 37 threads the bilayer. At proline 38–tryptophan 411 the chain is on the lumenal side. Histidine 93–threonine 101 contributes to the 3'-phosphoadenylyl sulfate binding site. Residues lysine 123–lysine 124, arginine 140, tryptophan 145, and histidine 150 contribute to the substrate site. Histidine 150 (proton acceptor) is an active-site residue. Residues arginine 185 and serine 193 each coordinate 3'-phosphoadenylyl sulfate. Substrate-binding residues include histidine 197 and tryptophan 204. Asparagine 264 is a glycosylation site (N-linked (GlcNAc...) asparagine). Methionine 317–tyrosine 319 serves as a coordination point for 3'-phosphoadenylyl sulfate. A glycan (N-linked (GlcNAc...) asparagine) is linked at asparagine 320. 3'-phosphoadenylyl sulfate is bound at residue arginine 323–alanine 324. Residues lysine 352 to leucine 387 are a coiled coil.

This sequence belongs to the sulfotransferase 6 family. Post-translationally, N-glycosylated. As to expression, expressed in fetal brain.

Its subcellular location is the membrane. The catalysed reaction is alpha-D-glucosaminyl-[heparan sulfate](n) + 3'-phosphoadenylyl sulfate = 6-sulfo-alpha-D-glucosaminyl-[heparan sulfate](n) + adenosine 3',5'-bisphosphate + H(+). Its function is as follows. 6-O-sulfation enzyme which catalyzes the transfer of sulfate from 3'-phosphoadenosine 5'-phosphosulfate (PAPS) to position 6 of the N-sulfoglucosamine residue (GlcNS) of heparan sulfate. Critical for normal neuronal development where it may play a role in neuron branching. May also play a role in limb development. May prefer iduronic acid. This is Heparan-sulfate 6-O-sulfotransferase 1 from Homo sapiens (Human).